The sequence spans 160 residues: UPF0262 protein BSUIS_A0274 (160 aa).

Belongs to the UPF0262 family.

In Brucella suis (strain ATCC 23445 / NCTC 10510), this protein is UPF0262 protein BSUIS_A0274.